The sequence spans 248 residues: MERSTHSTGWTCLPPPPPEPAAPGRGVCAMSTSWRDKQQPSLINFIAAFLAANSYRLNFLSISPDFIFNNGELSVAFIFETNWDCQNEGAVFSRVNMLKRQLKHLYVVVAVPTKEQNESFNRSYHKYGMKLGFPTFVPVTDPEMGFEKIVKIAHALGVCKQQDIISRLKNEREQAVQCTDSFLRVLTSIPGIDNHDANALAQAIGSIEAIAKASKKFILENTDLSTDKAETIVRFFRDPQYYLSPKIN.

A compositionally biased stretch (polar residues) spans 1-10 (MERSTHSTGW). Positions 1–25 (MERSTHSTGWTCLPPPPPEPAAPGR) are disordered.

This sequence belongs to the ERCC1/RAD10/SWI10 family. In terms of assembly, interacts with SHOC1 (via C-terminus). Interacts with HEI10. As to expression, highly expressed in anthers and pistil during meiosis. Expressed in pollen mother cells (PMCs) during meiosis. Expressed at low levels in roots, shoots, leaves, flowers, and glumes.

The protein resides in the chromosome. The protein localises to the nucleus. Its subcellular location is the cytoplasm. It localises to the cell membrane. Functionally, essential for normal crossover (CO) formation during meiosis. Essential component for the formation of class I meiotic COs. Interacts with SHOC1, another meiotic component, to regulate CO formation, possibly by stabilizing the recombination intermediates during meiosis. PTD and SHOC1 may form transient heterotrimeric or heterotetrameric complexes with HEI10 and/or ZIP4 to promote class I COs formation. Does not seem to be involved in early meiotic recombination steps involving double-strand break (DSB) formation, processing, and single-strand invasion. Does not seem to be involved in homologous pairing or synaptonemal complex (SC) assembly. The polypeptide is Protein PARTING DANCERS homolog (Oryza sativa subsp. japonica (Rice)).